The following is a 130-amino-acid chain: Small ribosomal subunit protein uS8 (130 aa).

It belongs to the universal ribosomal protein uS8 family. Part of the 30S ribosomal subunit. Contacts proteins S5 and S12.

In terms of biological role, one of the primary rRNA binding proteins, it binds directly to 16S rRNA central domain where it helps coordinate assembly of the platform of the 30S subunit. The sequence is that of Small ribosomal subunit protein uS8 from Hahella chejuensis (strain KCTC 2396).